Reading from the N-terminus, the 504-residue chain is Deoxyguanosinetriphosphate triphosphohydrolase (504 aa).

The region spanning 66–273 (RLTHSLEVQQ…MEAADDISYC (208 aa)) is the HD domain.

This sequence belongs to the dGTPase family. Type 1 subfamily. Homotetramer. The cofactor is Mg(2+).

The enzyme catalyses dGTP + H2O = 2'-deoxyguanosine + triphosphate + H(+). DGTPase preferentially hydrolyzes dGTP over the other canonical NTPs. This chain is Deoxyguanosinetriphosphate triphosphohydrolase, found in Klebsiella pneumoniae subsp. pneumoniae (strain ATCC 700721 / MGH 78578).